The sequence spans 162 residues: Caveolin-2 (162 aa).

Topologically, residues 1–86 (MGLETEKADV…FEISKYVLYK (86 aa)) are cytoplasmic. A Phosphotyrosine; by SRC modification is found at Y19. Residues S20 and S23 each carry the phosphoserine modification. Residue Y27 is modified to Phosphotyrosine; by SRC. S36 is subject to Phosphoserine. An intramembrane region (helical) is located at residues 87 to 107 (FLTVFLAIPLAFVAGILFATL). At 108–162 (SCLHIWIIMPFVKTCLMVLPSVQTIWKSVTDVIIAPLCTSVGRSFSSISLRLSQD) the chain is on the cytoplasmic side.

It belongs to the caveolin family. Monomer or homodimer. Interacts with CAV1; the interaction forms a stable heterooligomeric complex that is required for targeting to lipid rafts and for caveolae formation. Tyrosine phosphorylated forms do not form heterooligomers with the Tyr-19-phosphorylated form existing as a monomer or dimer, and the Tyr-27-form as a monomer only. Interacts (tyrosine phosphorylated form) with the SH2 domain-containing proteins, RASA1, NCK1 and SRC. Interacts (tyrosine phosphorylated form) with INSR, the interaction (Tyr-27-phosphorylated form) is increased on insulin stimulation. Interacts (Tyr-19 phosphorylated form) with MAPK1 (phosphorylated form); the interaction, promoted by insulin, leads to nuclear location and MAPK1 activation. Interacts with STAT3; the interaction is increased on insulin-induced tyrosine phosphorylation leading to STAT activation. Phosphorylated on serine and tyrosine residues. CAV1 promotes phosphorylation on Ser-23 which then targets the complex to the plasma membrane, lipid rafts and caveolae. Phosphorylation on Ser-36 appears to modulate mitosis in endothelial cells. Phosphorylation on both Tyr-19 and Tyr-27 is required for insulin-induced 'Ser-727' phosphorylation of STAT3 and its activation. Phosphorylation on Tyr-19 is required for insulin-induced phosphorylation of MAPK1 and DNA binding of STAT3. Tyrosine phosphorylation is induced by both EGF and insulin (By. similarity).

The protein localises to the nucleus. Its subcellular location is the cytoplasm. It is found in the golgi apparatus membrane. The protein resides in the cell membrane. It localises to the membrane. The protein localises to the caveola. May act as a scaffolding protein within caveolar membranes. Interacts directly with G-protein alpha subunits and can functionally regulate their activity. Acts as an accessory protein in conjunction with CAV1 in targeting to lipid rafts and driving caveolae formation. The Ser-36 phosphorylated form has a role in modulating mitosis in endothelial cells. Positive regulator of cellular mitogenesis of the MAPK signaling pathway. Required for the insulin-stimulated nuclear translocation and activation of MAPK1 and STAT3, and the subsequent regulation of cell cycle progression. In Otolemur garnettii (Small-eared galago), this protein is Caveolin-2 (CAV2).